The sequence spans 68 residues: MRAVTRNKIVNNLYFSTFLIAFASVAIGSVLPCPAHSVDSDSPAVQQHKLQLAHEQELKRKDALSKKI.

The protein belongs to the COA2 family.

Its subcellular location is the mitochondrion inner membrane. Functionally, required for efficient assembly of cytochrome c oxidase in the mitochondrial inner membrane. Seems to be involved in the SHY1-mediated step of cytochrome c oxidase maturation. May aid in stabilizing an early COX1 intermediate containing the nuclear subunits COX5A and COX6. This is Cytochrome c oxidase assembly factor 2 (COA2) from Saccharomyces cerevisiae (strain ATCC 204508 / S288c) (Baker's yeast).